The following is a 348-amino-acid chain: GTPase Obg 1 (348 aa).

An Obg domain is found at 1–159 (MSFVDEAKIH…HCVLLKLKIV (159 aa)). The OBG-type G domain maps to 160–329 (SDVGIIGMPN…LHAQVKKAVV (170 aa)). Residues 166-173 (GMPNAGKS), 191-195 (FTTLE), 212-215 (DIPG), 279-282 (NKCD), and 310-312 (GDE) each bind GTP. Positions 173 and 193 each coordinate Mg(2+).

The protein belongs to the TRAFAC class OBG-HflX-like GTPase superfamily. OBG GTPase family. As to quaternary structure, monomer. The cofactor is Mg(2+).

The protein resides in the cytoplasm. An essential GTPase which binds GTP, GDP and possibly (p)ppGpp with moderate affinity, with high nucleotide exchange rates and a fairly low GTP hydrolysis rate. Plays a role in control of the cell cycle, stress response, ribosome biogenesis and in those bacteria that undergo differentiation, in morphogenesis control. The protein is GTPase Obg 1 of Anaplasma marginale (strain Florida).